The following is a 484-amino-acid chain: PTS system N-acetylmuramic acid-specific EIIBC component (484 aa).

The PTS EIIB type-1 domain occupies 1–89 (MAKITSNTVS…NQLIDSLTSG (89 aa)). Cysteine 28 (phosphocysteine intermediate; for EIIB activity) is an active-site residue. The PTS EIIC type-1 domain maps to 125 to 484 (SKFATIFTPL…FFGCKDVDLS (360 aa)). The next 10 membrane-spanning stretches (helical) occupy residues 127-147 (FATI…LLGF), 168-188 (LIAY…ILIG), 194-214 (AFGG…LGYN), 228-248 (FFGF…AAII), 266-286 (MILT…LIIM), 310-330 (AAIL…QGFV), 345-365 (LFPI…ALYF), 379-399 (GAII…VTLP), 409-429 (IGGA…LPVG), and 451-471 (IFPG…VGFL).

Its subcellular location is the cell inner membrane. The enzyme catalyses N-acetyl-beta-D-muramate(out) + N(pros)-phospho-L-histidyl-[protein] = N-acetyl-beta-D-muramate 6-phosphate(in) + L-histidyl-[protein]. The phosphoenolpyruvate-dependent sugar phosphotransferase system (sugar PTS), a major carbohydrate active transport system, catalyzes the phosphorylation of incoming sugar substrates concomitantly with their translocation across the cell membrane. This system is involved in N-acetylmuramic acid (MurNAc) transport, yielding cytoplasmic MurNAc-6-P. Is also able to take up anhydro-N-acetylmuramic acid (anhMurNAc), but cannot phosphorylate the carbon 6, probably because of the 1,6-anhydro ring. This is PTS system N-acetylmuramic acid-specific EIIBC component (murP) from Vibrio parahaemolyticus serotype O3:K6 (strain RIMD 2210633).